Reading from the N-terminus, the 316-residue chain is Lipoyl synthase (316 aa).

Positions 1–15 (MKARNESMSKGEYKT) are enriched in basic and acidic residues. A disordered region spans residues 1–33 (MKARNESMSKGEYKTKSLKNRPDPTQPKLKKPS). [4Fe-4S] cluster is bound by residues cysteine 64, cysteine 69, cysteine 75, cysteine 90, cysteine 94, cysteine 97, and serine 304. In terms of domain architecture, Radical SAM core spans 76-293 (FGHGTATFMI…EQAGMEMGFT (218 aa)).

It belongs to the radical SAM superfamily. Lipoyl synthase family. It depends on [4Fe-4S] cluster as a cofactor.

The protein localises to the cytoplasm. It carries out the reaction [[Fe-S] cluster scaffold protein carrying a second [4Fe-4S](2+) cluster] + N(6)-octanoyl-L-lysyl-[protein] + 2 oxidized [2Fe-2S]-[ferredoxin] + 2 S-adenosyl-L-methionine + 4 H(+) = [[Fe-S] cluster scaffold protein] + N(6)-[(R)-dihydrolipoyl]-L-lysyl-[protein] + 4 Fe(3+) + 2 hydrogen sulfide + 2 5'-deoxyadenosine + 2 L-methionine + 2 reduced [2Fe-2S]-[ferredoxin]. It functions in the pathway protein modification; protein lipoylation via endogenous pathway; protein N(6)-(lipoyl)lysine from octanoyl-[acyl-carrier-protein]: step 2/2. Functionally, catalyzes the radical-mediated insertion of two sulfur atoms into the C-6 and C-8 positions of the octanoyl moiety bound to the lipoyl domains of lipoate-dependent enzymes, thereby converting the octanoylated domains into lipoylated derivatives. This chain is Lipoyl synthase, found in Hydrogenovibrio crunogenus (strain DSM 25203 / XCL-2) (Thiomicrospira crunogena).